The sequence spans 339 residues: Spore coat polysaccharide biosynthesis protein SpsG (339 aa).

A helical membrane pass occupies residues isoleucine 241–leucine 261.

The protein to M.jannaschii MJ1062.

It localises to the cell membrane. It functions in the pathway spore coat biogenesis; spore coat polysaccharide biosynthesis. The protein is Spore coat polysaccharide biosynthesis protein SpsG (spsG) of Bacillus subtilis (strain 168).